Reading from the N-terminus, the 571-residue chain is Serine/threonine-protein kinase Nek7 (571 aa).

The 259-residue stretch at 19–277 (YHVVEQVRRG…LRNPSLQPYL (259 aa)) folds into the Protein kinase domain. ATP-binding positions include 25-33 (VRRGKSSSD) and Lys-48. The active-site Proton acceptor is Asp-144. 2 disordered regions span residues 298-321 (SPKDKARRNSLPGKFGKERVSREK) and 338-363 (TETGSSSSSQPASSTNGAEDKLETKR). Residues 312–321 (FGKERVSREK) show a composition bias toward basic and acidic residues. The segment covering 342-351 (SSSSSQPASS) has biased composition (low complexity).

This sequence belongs to the protein kinase superfamily. NEK Ser/Thr protein kinase family. NIMA subfamily.

It carries out the reaction L-seryl-[protein] + ATP = O-phospho-L-seryl-[protein] + ADP + H(+). The enzyme catalyses L-threonyl-[protein] + ATP = O-phospho-L-threonyl-[protein] + ADP + H(+). May be involved in plant development processes. This chain is Serine/threonine-protein kinase Nek7 (NEK7), found in Arabidopsis thaliana (Mouse-ear cress).